The chain runs to 195 residues: Probable molybdenum cofactor guanylyltransferase (195 aa).

GTP-binding positions include 6 to 8, lysine 18, aspartate 67, and aspartate 93; that span reads LAG. Aspartate 93 contributes to the Mg(2+) binding site.

This sequence belongs to the MobA family. Requires Mg(2+) as cofactor.

The protein localises to the cytoplasm. The catalysed reaction is Mo-molybdopterin + GTP + H(+) = Mo-molybdopterin guanine dinucleotide + diphosphate. In terms of biological role, transfers a GMP moiety from GTP to Mo-molybdopterin (Mo-MPT) cofactor (Moco or molybdenum cofactor) to form Mo-molybdopterin guanine dinucleotide (Mo-MGD) cofactor. This Thermococcus sibiricus (strain DSM 12597 / MM 739) protein is Probable molybdenum cofactor guanylyltransferase.